A 63-amino-acid polypeptide reads, in one-letter code: Large ribosomal subunit protein bL28 (63 aa).

The protein belongs to the bacterial ribosomal protein bL28 family.

In Clostridium botulinum (strain ATCC 19397 / Type A), this protein is Large ribosomal subunit protein bL28.